Here is a 394-residue protein sequence, read N- to C-terminus: Quinolinate synthase (394 aa).

2 residues coordinate iminosuccinate: histidine 67 and serine 84. Cysteine 131 provides a ligand contact to [4Fe-4S] cluster. Iminosuccinate-binding positions include 163–165 (YMN) and serine 184. A [4Fe-4S] cluster-binding site is contributed by cysteine 254. Residues 280–282 (HPE) and threonine 297 contribute to the iminosuccinate site. Residue cysteine 346 participates in [4Fe-4S] cluster binding.

This sequence belongs to the quinolinate synthase family. Type 3 subfamily. [4Fe-4S] cluster is required as a cofactor.

Its subcellular location is the cytoplasm. The enzyme catalyses iminosuccinate + dihydroxyacetone phosphate = quinolinate + phosphate + 2 H2O + H(+). It participates in cofactor biosynthesis; NAD(+) biosynthesis; quinolinate from iminoaspartate: step 1/1. In terms of biological role, catalyzes the condensation of iminoaspartate with dihydroxyacetone phosphate to form quinolinate. The polypeptide is Quinolinate synthase (Streptomyces coelicolor (strain ATCC BAA-471 / A3(2) / M145)).